Consider the following 41-residue polypeptide: Large ribosomal subunit protein bL36 (41 aa).

Belongs to the bacterial ribosomal protein bL36 family.

This is Large ribosomal subunit protein bL36 from Rhodopseudomonas palustris (strain BisA53).